An 895-amino-acid polypeptide reads, in one-letter code: Catenin alpha-3 (895 aa).

Phosphoserine is present on S56. A coiled-coil region spans residues 74-111 (EKIAQEATVLKDELTASLEEVRKESEALKVSAERFTDD). S160 carries the phosphoserine modification. Residues 325 to 379 (RERIIAECNAIRQALQDLLSEYMNNAGKKERSNTLNIALDNMCKKTRDLRRQLRK) adopt a coiled-coil conformation. A phosphoserine mark is found at S637 and S647. T649 is subject to Phosphothreonine.

The protein belongs to the vinculin/alpha-catenin family. Interacts with CTNNB1. Interacts with PKP2. In terms of tissue distribution, predominantly expressed in heart and testis. Expressed at lower levels in brain, kidney, liver and skeletal muscle.

The protein resides in the cytoplasm. The protein localises to the cytoskeleton. It is found in the cell junction. Its subcellular location is the desmosome. Its function is as follows. May be involved in formation of stretch-resistant cell-cell adhesion complexes. The polypeptide is Catenin alpha-3 (Homo sapiens (Human)).